Consider the following 584-residue polypeptide: Sensor histidine kinase/phosphatase LytS (584 aa).

The next 6 helical transmembrane spans lie at 2-22 (LSLT…AYVL), 42-62 (WQLC…GIVI), 92-112 (VAGL…SGIF), 121-141 (AQVY…FGLQ), 154-174 (SAMI…TFSH), and 186-206 (IALP…SIII). The GAF domain occupies 311–363 (HPNCPLRAAIVIPLEMHGSIVGTLKMYFTNPNDLTFVERQLAEGLANIFSSQI). One can recognise a Histidine kinase domain in the interval 379–461 (EIKSLQAQVS…RYPGRFNINI (83 aa)). Position 390 is a phosphohistidine; by autocatalysis (His390).

In terms of processing, autophosphorylated on His-390.

The protein resides in the cell membrane. The catalysed reaction is ATP + protein L-histidine = ADP + protein N-phospho-L-histidine.. Functionally, member of the two-component regulatory system LytR/LytS that regulates genes involved in autolysis, programmed cell death, biofilm formation and cell wall metabolism. Also participates in sensing and responding to host defense cationic antimicrobial peptides (HDPs). Functions as a sensor protein kinase which is autophosphorylated at a histidine residue and transfers its phosphate group to the conserved aspartic acid residue in the regulatory domain of LytR. In turn, LytR binds to the upstream promoter regions of target genes including lrgA and lrgB, to positively regulate their expression. Also possesses a phosphatase activity that dephosphorylates and thus inactivates LytR. This chain is Sensor histidine kinase/phosphatase LytS (lytS), found in Staphylococcus aureus (strain USA300).